The chain runs to 353 residues: Lipase-specific foldase (353 aa).

Residues 1–19 (MAQADRPARGGLAARPMRG) are Cytoplasmic-facing. A helical transmembrane segment spans residues 20–40 (ASFALAGLVACAACAAVVLWL). Residues 41-353 (RPAAPSPAPA…AASLDRGAGG (313 aa)) lie on the Periplasmic side of the membrane.

Belongs to the lipase chaperone family. In terms of assembly, monomer. Interacts with lipase (lip).

The protein resides in the cell inner membrane. In terms of biological role, involved in the folding of the extracellular lipase (lip) during its passage through the periplasm. This chain is Lipase-specific foldase, found in Burkholderia plantarii.